The following is a 468-amino-acid chain: 3-isopropylmalate dehydratase large subunit (468 aa).

Residues cysteine 349, cysteine 409, and cysteine 412 each coordinate [4Fe-4S] cluster.

It belongs to the aconitase/IPM isomerase family. LeuC type 1 subfamily. In terms of assembly, heterodimer of LeuC and LeuD. [4Fe-4S] cluster serves as cofactor.

The enzyme catalyses (2R,3S)-3-isopropylmalate = (2S)-2-isopropylmalate. The protein operates within amino-acid biosynthesis; L-leucine biosynthesis; L-leucine from 3-methyl-2-oxobutanoate: step 2/4. Catalyzes the isomerization between 2-isopropylmalate and 3-isopropylmalate, via the formation of 2-isopropylmaleate. The chain is 3-isopropylmalate dehydratase large subunit from Shewanella baltica (strain OS223).